The chain runs to 640 residues: G protein-coupled receptor kinase 1 (640 aa).

An N-terminal region spans residues 1–201 (MEIENIVANT…LEKRPVDKHT (201 aa)). The RGS domain maps to 52–187 (YAFVVEKQPI…IQTMYFHRFL (136 aa)). The 268-residue stretch at 202–469 (FRLYRVLGKG…AEEIRAHPFF (268 aa)) folds into the Protein kinase domain. Residues 208-216 (LGKGGFGEV) and K231 contribute to the ATP site. D327 serves as the catalytic Proton acceptor. Residues 479–544 (EPVPWKKMEA…GCVSIPWQSE (66 aa)) form the AGC-kinase C-terminal domain. The tract at residues 610 to 640 (GVDQQQPSTSAKPAAVRSSRAASASGRTSMI) is disordered. Residues 619 to 640 (SAKPAAVRSSRAASASGRTSMI) show a composition bias toward low complexity.

The protein belongs to the protein kinase superfamily. AGC Ser/Thr protein kinase family. GPRK subfamily.

It carries out the reaction [G-protein-coupled receptor] + ATP = [G-protein-coupled receptor]-phosphate + ADP + H(+). Functionally, specifically phosphorylates the activated forms of G protein-coupled receptors. This Caenorhabditis briggsae protein is G protein-coupled receptor kinase 1 (grk-1).